A 217-amino-acid chain; its full sequence is NAD(P)H-quinone oxidoreductase subunit M, chloroplastic (217 aa).

The N-terminal 21 residues, 1-21, are a transit peptide targeting the chloroplast; the sequence is MVAAFSYTACTKLSLLHPSMV. The disordered stretch occupies residues 48 to 67; the sequence is ETETLKEEQSTEKMKKQPTP. The segment covering 50–62 has biased composition (basic and acidic residues); that stretch reads ETLKEEQSTEKMK.

The protein belongs to the NDH complex subunit M family. Part of the chloroplast NDH complex, composed of a mixture of chloroplast and nucleus encoded subunits. Component of the NDH subcomplex A, at least composed of ndhH, ndhI, ndhJ, ndhK, ndhL, ndhM, ndhN and ndhO.

The protein localises to the plastid. The protein resides in the chloroplast thylakoid membrane. The catalysed reaction is a plastoquinone + NADH + (n+1) H(+)(in) = a plastoquinol + NAD(+) + n H(+)(out). The enzyme catalyses a plastoquinone + NADPH + (n+1) H(+)(in) = a plastoquinol + NADP(+) + n H(+)(out). NDH shuttles electrons from NAD(P)H:plastoquinone, via FMN and iron-sulfur (Fe-S) centers, to quinones in the photosynthetic chain and possibly in a chloroplast respiratory chain. The immediate electron acceptor for the enzyme in this species is believed to be plastoquinone. Couples the redox reaction to proton translocation, and thus conserves the redox energy in a proton gradient. In Arabidopsis thaliana (Mouse-ear cress), this protein is NAD(P)H-quinone oxidoreductase subunit M, chloroplastic.